The chain runs to 1038 residues: Isoleucine--tRNA ligase (1038 aa).

Residues 47–57 carry the 'HIGH' region motif; it reads PFATGLPHYGH. Residues 591–595 carry the 'KMSKS' region motif; it reads KMSKR. Lysine 594 is a binding site for ATP.

Belongs to the class-I aminoacyl-tRNA synthetase family. IleS type 2 subfamily. Monomer. The cofactor is Zn(2+).

It is found in the cytoplasm. It catalyses the reaction tRNA(Ile) + L-isoleucine + ATP = L-isoleucyl-tRNA(Ile) + AMP + diphosphate. In terms of biological role, catalyzes the attachment of isoleucine to tRNA(Ile). As IleRS can inadvertently accommodate and process structurally similar amino acids such as valine, to avoid such errors it has two additional distinct tRNA(Ile)-dependent editing activities. One activity is designated as 'pretransfer' editing and involves the hydrolysis of activated Val-AMP. The other activity is designated 'posttransfer' editing and involves deacylation of mischarged Val-tRNA(Ile). The chain is Isoleucine--tRNA ligase from Protochlamydia amoebophila (strain UWE25).